The primary structure comprises 246 residues: uncharacterized protein (246 aa).

A helical transmembrane segment spans residues 7–29; the sequence is GRGALASTGGCVVLAVAALMFVF.

The protein resides in the membrane. This is an uncharacterized protein from Treponema pallidum (strain Nichols).